The sequence spans 561 residues: Potassium-transporting ATPase potassium-binding subunit (561 aa).

The next 12 helical transmembrane spans lie at 5 to 25, 60 to 80, 86 to 106, 131 to 151, 177 to 197, 247 to 267, 281 to 301, 324 to 344, 376 to 396, 415 to 435, 488 to 508, and 537 to 557; these read LAAGLQVVFVLAVLAVAYVPV, YGYAGSVLGFSAASVLFLYAL, VLPLSGDLSGVSPAVAFNTAV, GLAVQNFVSAAVGMAVAVALI, ILLPFSFVIALILLSQGVIQS, PTPVSNIVEILAILLIPVSLT, LTLLAVMGILWGSLLAVTLAA, FGIPGTALFAVSTTGTSTGAV, GLYGILVLALIAVFVGGLLVG, ALSVLVMPALVLIGTGITVIL, ALGLCMLFGRFLPIIFVLALA, and GTVVLVAALTFFPALALGPIA.

It belongs to the KdpA family. The system is composed of three essential subunits: KdpA, KdpB and KdpC.

The protein resides in the cell membrane. Part of the high-affinity ATP-driven potassium transport (or Kdp) system, which catalyzes the hydrolysis of ATP coupled with the electrogenic transport of potassium into the cytoplasm. This subunit binds the extracellular potassium ions and delivers the ions to the membrane domain of KdpB through an intramembrane tunnel. In Rhodococcus opacus (strain B4), this protein is Potassium-transporting ATPase potassium-binding subunit.